Here is a 301-residue protein sequence, read N- to C-terminus: Probable alpha-L-glutamate ligase (301 aa).

Residues 104-287 enclose the ATP-grasp domain; sequence TQLLARKGIG…IAGTIYAFLE (184 aa). ATP is bound by residues K141, 178–179, D187, and 211–213; these read EY and RSN. Residues D248, E260, and N262 each coordinate Mg(2+). D248, E260, and N262 together coordinate Mn(2+).

Belongs to the RimK family. The cofactor is Mg(2+). It depends on Mn(2+) as a cofactor.

This is Probable alpha-L-glutamate ligase from Alkalilimnicola ehrlichii (strain ATCC BAA-1101 / DSM 17681 / MLHE-1).